Here is a 356-residue protein sequence, read N- to C-terminus: S-adenosylmethionine:tRNA ribosyltransferase-isomerase (356 aa).

This sequence belongs to the QueA family. As to quaternary structure, monomer.

The protein localises to the cytoplasm. The enzyme catalyses 7-aminomethyl-7-carbaguanosine(34) in tRNA + S-adenosyl-L-methionine = epoxyqueuosine(34) in tRNA + adenine + L-methionine + 2 H(+). The protein operates within tRNA modification; tRNA-queuosine biosynthesis. Transfers and isomerizes the ribose moiety from AdoMet to the 7-aminomethyl group of 7-deazaguanine (preQ1-tRNA) to give epoxyqueuosine (oQ-tRNA). The chain is S-adenosylmethionine:tRNA ribosyltransferase-isomerase from Escherichia coli (strain 55989 / EAEC).